Consider the following 191-residue polypeptide: Nascent polypeptide-associated complex subunit alpha (191 aa).

Residues 24–89 (SRPERKARKA…AKVEDPNSAA (66 aa)) form the NAC-A/B domain. The disordered stretch occupies residues 126 to 149 (QDAPSADSSAPAPSGEATDASASG). Residues 127–139 (DAPSADSSAPAPS) are compositionally biased toward low complexity. Positions 153–191 (VSDEEIQLIVAQTGVDEAKAREAYISEKGDLINAIMKLQ) constitute a UBA domain.

This sequence belongs to the NAC-alpha family. In terms of assembly, part of the nascent polypeptide-associated complex (NAC), consisting of EGD2 and EGD1. NAC associates with ribosomes via EGD1.

It is found in the cytoplasm. It localises to the nucleus. Functionally, component of the nascent polypeptide-associated complex (NAC), a dynamic component of the ribosomal exit tunnel, protecting the emerging polypeptides from interaction with other cytoplasmic proteins to ensure appropriate nascent protein targeting. The NAC complex also promotes mitochondrial protein import by enhancing productive ribosome interactions with the outer mitochondrial membrane and blocks the inappropriate interaction of ribosomes translating non-secretory nascent polypeptides with translocation sites in the membrane of the endoplasmic reticulum. EGD2 may also be involved in transcription regulation. In Cryptococcus neoformans var. neoformans serotype D (strain B-3501A) (Filobasidiella neoformans), this protein is Nascent polypeptide-associated complex subunit alpha (EGD2).